The sequence spans 200 residues: uncharacterized protein (200 aa).

Positions 1–21 (MSNSAQRDARNSRDESARASD) are disordered. Residues 7–21 (RDARNSRDESARASD) show a composition bias toward basic and acidic residues.

This is an uncharacterized protein from Mycobacterium tuberculosis (strain ATCC 25618 / H37Rv).